The sequence spans 427 residues: Glutamate-1-semialdehyde 2,1-aminomutase (427 aa).

Position 265 is an N6-(pyridoxal phosphate)lysine (Lys-265).

This sequence belongs to the class-III pyridoxal-phosphate-dependent aminotransferase family. HemL subfamily. As to quaternary structure, homodimer. Pyridoxal 5'-phosphate serves as cofactor.

Its subcellular location is the cytoplasm. It catalyses the reaction (S)-4-amino-5-oxopentanoate = 5-aminolevulinate. It participates in porphyrin-containing compound metabolism; protoporphyrin-IX biosynthesis; 5-aminolevulinate from L-glutamyl-tRNA(Glu): step 2/2. This Teredinibacter turnerae (strain ATCC 39867 / T7901) protein is Glutamate-1-semialdehyde 2,1-aminomutase.